A 249-amino-acid chain; its full sequence is Derlin-2 (249 aa).

Topologically, residues 1–21 are cytoplasmic; sequence MAQAVEEWYRQMPIITRSYLT. Residues 22–42 traverse the membrane as a helical segment; it reads AAVVTTVGCTLEIISPYHLYL. The Lumenal segment spans residues 43–96; the sequence is NPKLVVQHYEIWRLVTNFLYFRKMDLDFLFHMFFLARYCKLLEENSFRGRTADF. Residues 97–117 form a helical membrane-spanning segment; that stretch reads FYMLLFGATVLTGIVLIGGMI. Residues 118-122 lie on the Cytoplasmic side of the membrane; that stretch reads PYISE. A helical membrane pass occupies residues 123–143; sequence TFARILFLSNSLTFMMVYVWS. Over 144-152 the chain is Lumenal; it reads KHNPFIHMS. The helical transmembrane segment at 153-173 threads the bilayer; sequence FLGLFTFTAAYLPWVLLGFSI. The Cytoplasmic segment spans residues 174–249; the sequence is LVGSSTWVDL…GAMGADPQAQ (76 aa).

It belongs to the derlin family.

The protein resides in the endoplasmic reticulum membrane. In terms of biological role, may be involved in the degradation process of specific misfolded endoplasmic reticulum (ER) luminal proteins. This chain is Derlin-2 (DER2), found in Oryza sativa subsp. japonica (Rice).